The chain runs to 289 residues: Mas-related G-protein coupled receptor member G (289 aa).

At 1–13 (MLSIFNIWGTFNR) the chain is on the extracellular side. The chain crosses the membrane as a helical span at residues 14–34 (VLFFLSLTVSLAGLAGNTLLL). At 35–49 (WHLGLRIKKGPFNTY) the chain is on the cytoplasmic side. A helical membrane pass occupies residues 50-70 (LLHLAAADFLFLSCQVGFSIA). The Extracellular segment spans residues 71 to 80 (KIASGYEDTL). Residues 81 to 101 (YFPVTFLWFAVGLWLLAAFIV) traverse the membrane as a helical segment. Residues 102 to 123 (DCCLSYMFPSFCGPNCRPRYTS) are Cytoplasmic-facing. A helical transmembrane segment spans residues 124 to 144 (FVLCLVIWALTMLAVLLPANA). Over 145-164 (CGLLYNRMSLLVCLKYHWVS) the chain is Extracellular. The helical transmembrane segment at 165–185 (VVWLGVLASTACGASMFLLVF) threads the bilayer. The Cytoplasmic segment spans residues 186-200 (GNCCSSQPPSKFCKL). Residues 201 to 221 (AQCSGILLFFCRLPLVFYWCL) traverse the membrane as a helical segment. Residue Arg222 is a topological domain, extracellular. A helical membrane pass occupies residues 223–243 (PVIKFLLPFFFPLATLLACID). Residues 244 to 289 (SSAKPLLYYLKGRQLRKEPLQVALNRALGEESQSSSGGISLPMSRV) are Cytoplasmic-facing.

Belongs to the G-protein coupled receptor 1 family. Mas subfamily.

It localises to the cell membrane. Its function is as follows. Orphan receptor. May regulate nociceptor function and/or development, including the sensation or modulation of pain. The polypeptide is Mas-related G-protein coupled receptor member G (Mrgprg) (Rattus norvegicus (Rat)).